Reading from the N-terminus, the 257-residue chain is Imidazole glycerol phosphate synthase subunit HisF (257 aa).

Active-site residues include aspartate 11 and aspartate 130.

This sequence belongs to the HisA/HisF family. As to quaternary structure, heterodimer of HisH and HisF.

The protein resides in the cytoplasm. It catalyses the reaction 5-[(5-phospho-1-deoxy-D-ribulos-1-ylimino)methylamino]-1-(5-phospho-beta-D-ribosyl)imidazole-4-carboxamide + L-glutamine = D-erythro-1-(imidazol-4-yl)glycerol 3-phosphate + 5-amino-1-(5-phospho-beta-D-ribosyl)imidazole-4-carboxamide + L-glutamate + H(+). It participates in amino-acid biosynthesis; L-histidine biosynthesis; L-histidine from 5-phospho-alpha-D-ribose 1-diphosphate: step 5/9. In terms of biological role, IGPS catalyzes the conversion of PRFAR and glutamine to IGP, AICAR and glutamate. The HisF subunit catalyzes the cyclization activity that produces IGP and AICAR from PRFAR using the ammonia provided by the HisH subunit. This chain is Imidazole glycerol phosphate synthase subunit HisF, found in Shewanella frigidimarina (strain NCIMB 400).